Reading from the N-terminus, the 295-residue chain is Histamine N-methyltransferase (295 aa).

Residue Glu28 participates in substrate binding. The S-adenosyl-L-methionine site is built by Gly60, Glu89, Gln94, Ser120, and Ile143. Residue Asn284 participates in substrate binding.

It belongs to the class I-like SAM-binding methyltransferase superfamily. HNMT family. As to quaternary structure, monomer.

Its subcellular location is the cytoplasm. It catalyses the reaction histamine + S-adenosyl-L-methionine = N(tau)-methylhistamine + S-adenosyl-L-homocysteine + H(+). Inactivates histamine by N-methylation. Plays an important role in degrading histamine and in regulating the airway response to histamine. This is Histamine N-methyltransferase (Hnmt) from Mus musculus (Mouse).